Consider the following 329-residue polypeptide: L-carnitine dehydrogenase (329 aa).

Residue 19-24 (GAGVIG) participates in NAD(+) binding.

It belongs to the 3-hydroxyacyl-CoA dehydrogenase family. L-carnitine dehydrogenase subfamily. Homodimer.

It is found in the cytoplasm. It carries out the reaction carnitine + NAD(+) = 3-dehydrocarnitine + NADH + H(+). Its pathway is amine and polyamine metabolism; carnitine metabolism. Catalyzes the NAD(+)-dependent oxidation of L-carnitine to 3-dehydrocarnitine. The chain is L-carnitine dehydrogenase from Nocardiopsis dassonvillei (strain ATCC 23218 / DSM 43111 / CIP 107115 / JCM 7437 / KCTC 9190 / NBRC 14626 / NCTC 10488 / NRRL B-5397 / IMRU 509) (Actinomadura dassonvillei).